The chain runs to 467 residues: Cysteine--tRNA ligase (467 aa).

C27 contributes to the Zn(2+) binding site. Residues 29 to 39 carry the 'HIGH' region motif; it reads ATVQGLPHIGH. The Zn(2+) site is built by C209, H234, and E238. Residues 265–269 carry the 'KMSKS' region motif; sequence KMSKS. K268 serves as a coordination point for ATP.

This sequence belongs to the class-I aminoacyl-tRNA synthetase family. Monomer. It depends on Zn(2+) as a cofactor.

It localises to the cytoplasm. The catalysed reaction is tRNA(Cys) + L-cysteine + ATP = L-cysteinyl-tRNA(Cys) + AMP + diphosphate. The sequence is that of Cysteine--tRNA ligase from Mycolicibacterium gilvum (strain PYR-GCK) (Mycobacterium gilvum (strain PYR-GCK)).